The primary structure comprises 319 residues: Cell division protein PomZ (319 aa).

Position 61-68 (61-68 (KGGTGKTS)) interacts with ATP.

This sequence belongs to the ParA family. As to quaternary structure, interacts with FtsZ in pull-down experiments.

It localises to the cytoplasm. Functionally, spatial regulator of cell division that is involved in identifying the incipient division site, recruiting FtsZ to the division site and stabilizing the Z-ring. Binds ATP and GTP. The sequence is that of Cell division protein PomZ from Myxococcus xanthus (strain DK1622).